We begin with the raw amino-acid sequence, 159 residues long: NADH-quinone oxidoreductase subunit B (159 aa).

Positions 36, 37, 102, and 132 each coordinate [4Fe-4S] cluster.

It belongs to the complex I 20 kDa subunit family. In terms of assembly, NDH-1 is composed of 14 different subunits. Subunits NuoB, C, D, E, F, and G constitute the peripheral sector of the complex. It depends on [4Fe-4S] cluster as a cofactor.

The protein resides in the cell inner membrane. It catalyses the reaction a quinone + NADH + 5 H(+)(in) = a quinol + NAD(+) + 4 H(+)(out). In terms of biological role, NDH-1 shuttles electrons from NADH, via FMN and iron-sulfur (Fe-S) centers, to quinones in the respiratory chain. The immediate electron acceptor for the enzyme in this species is believed to be ubiquinone. Couples the redox reaction to proton translocation (for every two electrons transferred, four hydrogen ions are translocated across the cytoplasmic membrane), and thus conserves the redox energy in a proton gradient. The sequence is that of NADH-quinone oxidoreductase subunit B from Acidovorax ebreus (strain TPSY) (Diaphorobacter sp. (strain TPSY)).